Reading from the N-terminus, the 449-residue chain is Endoglucanase A (449 aa).

The tat-type signal signal peptide spans 1–31 (MSTRRTAAALLAAAAVAVGGLTALTTTAAQA). Positions 32–137 (APGCRVDYAV…SLNGTTCTGT (106 aa)) constitute a CBM2 domain. A disulfide bridge links Cys35 with Cys134. Residues 127–170 (FSLNGTTCTGTVPTTSPTPTPTPTTPTPTPTPTPTPTPTVTPQP) form a disordered region. Over residues 132-141 (TTCTGTVPTT) the composition is skewed to low complexity. The linker ('hinge') (Pro-Thr box) stretch occupies residues 139 to 168 (PTTSPTPTPTPTTPTPTPTPTPTPTPTVTP). A compositionally biased stretch (pro residues) spans 142–167 (SPTPTPTPTTPTPTPTPTPTPTPTVT). The active site involves Asp247. 2 cysteine pairs are disulfide-bonded: Cys248-Cys291 and Cys390-Cys426. Asp283 functions as the Proton donor in the catalytic mechanism. Catalysis depends on Asp423, which acts as the Nucleophile. The interval 438–449 (EIALEMARNARW) is catalytic.

It belongs to the glycosyl hydrolase 6 (cellulase B) family. The linker region (also termed 'hinge') may be a potential site for proteolysis. Post-translationally, predicted to be exported by the Tat system. The position of the signal peptide cleavage has not been experimentally proven.

It carries out the reaction Endohydrolysis of (1-&gt;4)-beta-D-glucosidic linkages in cellulose, lichenin and cereal beta-D-glucans.. Functionally, the biological conversion of cellulose to glucose generally requires three types of hydrolytic enzymes: (1) Endoglucanases which cut internal beta-1,4-glucosidic bonds; (2) Exocellobiohydrolases that cut the disaccharide cellobiose from the non-reducing end of the cellulose polymer chain; (3) Beta-1,4-glucosidases which hydrolyze the cellobiose and other short cello-oligosaccharides to glucose. The polypeptide is Endoglucanase A (cenA) (Cellulomonas fimi).